The chain runs to 216 residues: N-(5'-phosphoribosyl)anthranilate isomerase (216 aa).

This sequence belongs to the TrpF family.

It catalyses the reaction N-(5-phospho-beta-D-ribosyl)anthranilate = 1-(2-carboxyphenylamino)-1-deoxy-D-ribulose 5-phosphate. It functions in the pathway amino-acid biosynthesis; L-tryptophan biosynthesis; L-tryptophan from chorismate: step 3/5. This Methanopyrus kandleri (strain AV19 / DSM 6324 / JCM 9639 / NBRC 100938) protein is N-(5'-phosphoribosyl)anthranilate isomerase.